Reading from the N-terminus, the 970-residue chain is Translation initiation factor IF-2 (970 aa).

2 disordered regions span residues 54-270 (KILA…TATQ) and 328-348 (DKRR…KSLS). Residues 87–96 (QEAQPVEAQP) are compositionally biased toward low complexity. Residues 98 to 112 (YEEQPSYEEQPSYEE) show a composition bias toward polar residues. Over residues 121–149 (EVAAEAAPEPVEEPASSPEGGAPAGGAEP) the composition is skewed to low complexity. 2 stretches are compositionally biased toward pro residues: residues 150 to 160 (QPAPEAPPPSA) and 168 to 182 (PSAP…PAPS). A compositionally biased stretch (low complexity) spans 183 to 253 (VPAGAQPPGA…PHGPGAQPGQ (71 aa)). A tr-type G domain is found at 469 to 638 (IRPPVVTVMG…ALQSEVLELK (170 aa)). The interval 478–485 (GHVDHGKT) is G1. 478 to 485 (GHVDHGKT) lines the GTP pocket. The G2 stretch occupies residues 503–507 (GITQH). The G3 stretch occupies residues 524–527 (DTPG). GTP is bound by residues 524–528 (DTPGH) and 578–581 (NKID). A G4 region spans residues 578-581 (NKID). A G5 region spans residues 614–616 (SAR).

This sequence belongs to the TRAFAC class translation factor GTPase superfamily. Classic translation factor GTPase family. IF-2 subfamily.

The protein localises to the cytoplasm. Functionally, one of the essential components for the initiation of protein synthesis. Protects formylmethionyl-tRNA from spontaneous hydrolysis and promotes its binding to the 30S ribosomal subunits. Also involved in the hydrolysis of GTP during the formation of the 70S ribosomal complex. The sequence is that of Translation initiation factor IF-2 from Anaeromyxobacter sp. (strain Fw109-5).